Reading from the N-terminus, the 704-residue chain is PHD finger protein MALE MEIOCYTE DEATH 1 (704 aa).

Residues 606–656 (MVKCICRARDDDGERMISCDVCEVWQHTRCCGIDDSDTLPPLFVCSNCCEE) form a PHD-type zinc finger. The Zn(2+) site is built by Cys-609, Cys-611, Cys-624, Cys-627, His-632, Cys-635, Cys-650, and Cys-653.

As to quaternary structure, interacts with JMJ16 in the nucleus of male meiocytes, especially on pachytene chromosomes. In terms of tissue distribution, expressed in inflorescence, specifically in male meiocytes.

It is found in the nucleus. Its function is as follows. Probable transcription factor required for chromosome organization and progression during male meiosis (e.g. microsporogenesis). Necessary for fertility and meiotic progressive compaction of prophase I chromosomes to metaphase I bivalents. Together with JMJ16, promotes gene expression in male meiocytes in an H3K9me3-dependent manner, and contributes to meiotic chromosome condensation by triggering some condensin promoters (e.g. CAP-D3 and CAP-H). In Arabidopsis thaliana (Mouse-ear cress), this protein is PHD finger protein MALE MEIOCYTE DEATH 1.